The primary structure comprises 329 residues: Tetraacyldisaccharide 4'-kinase (329 aa).

57-64 (TAGGSGKT) contributes to the ATP binding site.

It belongs to the LpxK family.

It carries out the reaction a lipid A disaccharide + ATP = a lipid IVA + ADP + H(+). It participates in glycolipid biosynthesis; lipid IV(A) biosynthesis; lipid IV(A) from (3R)-3-hydroxytetradecanoyl-[acyl-carrier-protein] and UDP-N-acetyl-alpha-D-glucosamine: step 6/6. Its function is as follows. Transfers the gamma-phosphate of ATP to the 4'-position of a tetraacyldisaccharide 1-phosphate intermediate (termed DS-1-P) to form tetraacyldisaccharide 1,4'-bis-phosphate (lipid IVA). In Thiobacillus denitrificans (strain ATCC 25259 / T1), this protein is Tetraacyldisaccharide 4'-kinase.